The chain runs to 239 residues: SkfA peptide export ATP-binding protein SkfE (239 aa).

Residues 4-232 form the ABC transporter domain; sequence MQVQNLSKCY…AEWRKEVIRL (229 aa). 36–43 is a binding site for ATP; that stretch reads GPNGAGKT.

Belongs to the ABC transporter superfamily. SkfA peptide export (TC 3.A.1.128.1) family.

The protein resides in the cell membrane. It catalyses the reaction sulfate(out) + ATP + H2O = sulfate(in) + ADP + phosphate + H(+). The enzyme catalyses thiosulfate(out) + ATP + H2O = thiosulfate(in) + ADP + phosphate + H(+). Functionally, probably part of the ABC transporter SkfEF involved in the export of the bacteriocin SKF. Probably responsible for energy coupling to the transport system. The protein is SkfA peptide export ATP-binding protein SkfE of Bacillus subtilis (strain 168).